We begin with the raw amino-acid sequence, 500 residues long: Protein dcd1B (500 aa).

The signal sequence occupies residues 1–20 (MNLIKLFIICCLLISITVKS). 6 N-linked (GlcNAc...) asparagine glycosylation sites follow: Asn284, Asn331, Asn441, Asn459, Asn474, and Asn475. The tract at residues 464 to 500 (FSEQPPLPPPNNSSSSDSNSNSNSDSSSSSDSNSNSN) is disordered. A compositionally biased stretch (low complexity) spans 475–500 (NSSSSDSNSNSNSDSSSSSDSNSNSN).

It localises to the secreted. This Dictyostelium discoideum (Social amoeba) protein is Protein dcd1B (dcd1B).